The sequence spans 707 residues: Lipase maturation factor 2 (707 aa).

9 consecutive transmembrane segments (helical) span residues 11–31 (FLWG…AQIP), 78–98 (MEMI…FSFL), 102–122 (LVFL…QVFL), 126–146 (WDSL…VHAL), 220–240 (FSVV…FLPF), 256–276 (ILII…VLCC), 306–326 (LYSL…FWTV), 358–378 (ITFP…LKGM), and 398–418 (VIFS…YTYI). A glycan (N-linked (GlcNAc...) asparagine) is linked at Asn483. A helical transmembrane segment spans residues 634–654 (LLLHSFIFGIFTIYFLQAMFG). The segment at 659-707 (PGVAKQRHSKPPNEKKKQKSNSGQGESAAAKSSGHGADTVRRNKKNEKS) is disordered. The segment covering 696-707 (DTVRRNKKNEKS) has biased composition (basic and acidic residues).

The protein belongs to the lipase maturation factor family.

The protein localises to the endoplasmic reticulum membrane. Involved in the maturation of specific proteins in the endoplasmic reticulum. The sequence is that of Lipase maturation factor 2 (lmf2) from Xenopus tropicalis (Western clawed frog).